The primary structure comprises 101 residues: Urease subunit beta (101 aa).

Belongs to the urease beta subunit family. As to quaternary structure, heterotrimer of UreA (gamma), UreB (beta) and UreC (alpha) subunits. Three heterotrimers associate to form the active enzyme.

Its subcellular location is the cytoplasm. It catalyses the reaction urea + 2 H2O + H(+) = hydrogencarbonate + 2 NH4(+). It functions in the pathway nitrogen metabolism; urea degradation; CO(2) and NH(3) from urea (urease route): step 1/1. This Rhizobium etli (strain ATCC 51251 / DSM 11541 / JCM 21823 / NBRC 15573 / CFN 42) protein is Urease subunit beta.